The following is a 545-amino-acid chain: MDVQYVLADLQTGPESQSSQSSIHFHDMAPFYVVSIERQHGLSGLVSIVPCSTTPTIHYDEKDKKAYQKAWSRGRRFAALFENLLNGGKMATKTSCSLQQTPYLQLRDEALIVGSPLGTPTRTREGISSFHNMEFNFPGAKPVVSSQMLHITCPGLRSEESLFDKNGGALYDSVTVLTGMCLFTRKILDESVADGFLDTRKLLDMQLTLYEVERIAGLSSAIADIAALVLSRYDGKCHKPVNIILDLPTWHYYQSVEDQLQHRGYKPCEVMDWIEAITLRSQQLAGLLKSAVLHELDRRGVSSSQRLYDIQISPGSALVDDAFRETLKYENLPCLDNILEALSGSEDGSWQQFYSLLPERDRPQSIKDLSYLFYIFEVVRPAVLAGIQSGNQQTPTQSADMDSTVSHRQQQPASSRSYTSKQNQMPRPLVISVDDPSERKLYSKAHSFFLRLPKNPIYPADPTLVQVYTTRRVFVDGNRKGERLYRNDPSPVMPELSNGKLYGDGGDAGYSKYARELQQMDFIAKLYGAECAANIQRWSKEVGLC.

A compositionally biased stretch (polar residues) spans 390–425 (GNQQTPTQSADMDSTVSHRQQQPASSRSYTSKQNQM). Positions 390-433 (GNQQTPTQSADMDSTVSHRQQQPASSRSYTSKQNQMPRPLVISV) are disordered. Positions 434–438 (DDPSE) match the Conserved DDXXE motif motif.

This sequence belongs to the arginine-containing cyclodipeptide synthase family.

The catalysed reaction is L-glutamyl-tRNA(Glu) + L-arginyl-tRNA(Arg) = cyclo(L-arginyl-L-glutamyl) + tRNA(Glu) + tRNA(Arg) + 2 H(+). Its pathway is secondary metabolite biosynthesis. Arginine-containing cyclodipeptide synthase; part of the cluster that mediates the biosynthesis of a highly modified cyclo-arginine-glutamate dipeptide (cRE). Within the pathway, ateA acts as the scaffold-generating enzyme and is responsible for formation of the cyclo-Arg-Glu diketopiperazine (cRW) from L-arginyl-tRNA(Arg) + L-glutamyl-tRNA(Glu). Additional enzymes from the cluster then further modify the cyclo-Arg-Glu diketopiperazine (cRW) scaffold. The protein is Arginine-containing cyclodipeptide synthase ateA of Aspergillus terreus.